The primary structure comprises 121 residues: Basic phospholipase A2 homolog 2 (121 aa).

Cystine bridges form between C26/C115, C28/C44, C43/C95, C49/C121, C50/C88, C57/C81, and C75/C86. Residues 105–117 (KKYRYHLKPLCKK) are important for membrane-damaging activities in eukaryotes and bacteria; heparin-binding.

It belongs to the phospholipase A2 family. Group II subfamily. K49 sub-subfamily. As to quaternary structure, homodimer; non-covalently linked (probable alternative/compact dimer conformation in solution). As to expression, expressed by the venom gland.

The protein localises to the secreted. Functionally, snake venom phospholipase A2 homolog that lacks enzymatic activity. Is myotoxic and displays edema-inducing activities in mouse paw. Also displays cytotoxic activity against myotubes. A model of myotoxic mechanism has been proposed: an apo Lys49-PLA2 is activated by the entrance of a hydrophobic molecule (e.g. fatty acid) at the hydrophobic channel of the protein leading to a reorientation of a monomer. This reorientation causes a transition between 'inactive' to 'active' states, causing alignment of C-terminal and membrane-docking sites (MDoS) side-by-side and putting the membrane-disruption sites (MDiS) in the same plane, exposed to solvent and in a symmetric position for both monomers. The MDoS region stabilizes the toxin on membrane by the interaction of charged residues with phospholipid head groups. Subsequently, the MDiS region destabilizes the membrane with penetration of hydrophobic residues. This insertion causes a disorganization of the membrane, allowing an uncontrolled influx of ions (i.e. calcium and sodium), and eventually triggering irreversible intracellular alterations and cell death. The sequence is that of Basic phospholipase A2 homolog 2 from Bothrops brazili (Brazil's lancehead).